The chain runs to 64 residues: Alpha-conotoxin-like Lt1.3 (64 aa).

Residues methionine 1 to serine 21 form the signal peptide. A propeptide spanning residues phenylalanine 22 to aspartate 45 is cleaved from the precursor. 2 disulfide bridges follow: cysteine 47-cysteine 53 and cysteine 48-cysteine 61. The interval aspartate 49–proline 51 is lacks the Ser-Xaa-Pro motif that is crucial for potent interaction with nAChR.

This sequence belongs to the conotoxin A superfamily. As to expression, expressed by the venom duct.

It localises to the secreted. Alpha-conotoxins act on postsynaptic membranes, they bind to the nicotinic acetylcholine receptors (nAChR) and thus inhibit them. Has possibly a distinct nAChR binding mode from other alpha-conotoxins, due to a different three residue motif (lacks the Ser-Xaa-Pro motif). This chain is Alpha-conotoxin-like Lt1.3, found in Conus litteratus (Lettered cone).